We begin with the raw amino-acid sequence, 205 residues long: Probable GTP-binding protein EngB (205 aa).

Residues 29-203 (QGAEIAFIGR…KAVLSQWFRS (175 aa)) enclose the EngB-type G domain. GTP is bound by residues 37–44 (GRSNAGKS), 64–68 (GRTQM), 82–85 (DLPG), 149–152 (TKSD), and 182–184 (FSS). Mg(2+) contacts are provided by serine 44 and threonine 66.

This sequence belongs to the TRAFAC class TrmE-Era-EngA-EngB-Septin-like GTPase superfamily. EngB GTPase family. Requires Mg(2+) as cofactor.

Its function is as follows. Necessary for normal cell division and for the maintenance of normal septation. This chain is Probable GTP-binding protein EngB, found in Coxiella burnetii (strain RSA 331 / Henzerling II).